We begin with the raw amino-acid sequence, 1284 residues long: A-type inclusion protein A25 homolog (1284 aa).

Residues 340-383 form a disordered region; that stretch reads KPITNTGIEEPHATGGDKEEQEQQPVKVVQSKPDDGITPYNPFE. Over residues 348–357 the composition is skewed to basic and acidic residues; it reads EEPHATGGDK. Repeat copies occupy residues 611–637, 638–665, 666–689, 690–720, 721–751, 752–780, 781–811, 812–842, 843–871, and 872–912. Residues 611–912 form a 10 X approximate tandem repeats region; the sequence is VRRELEEERR…DMDQYKREIE (302 aa). The disordered stretch occupies residues 1169–1234; that stretch reads PLTTEDTEPK…PPKPETPQIS (66 aa). Low complexity predominate over residues 1180 to 1192; that stretch reads VEVVPPSSDVTEP. A compositionally biased stretch (polar residues) spans 1211-1221; it reads SEYQTSVSQVA.

Belongs to the poxviridae A25 protein family. In terms of assembly, interacts (via N-terminus) with protein A26.

It is found in the virion. Functionally, structural protein that forms a matrix surrounding the mature virion (MV) through interaction with protein A26. Presence of protein A25 in the virion structurally prevents direct virus-cell fusion mechanism. The protein is A-type inclusion protein A25 homolog (ATI) of Apodemus sylvaticus (European woodmouse).